The chain runs to 205 residues: Holliday junction branch migration complex subunit RuvA (205 aa).

The tract at residues Met1–Ala64 is domain I. Positions Asn65–Ile143 are domain II. Residues Gly144–Gly152 form a flexible linker region. A domain III region spans residues Ala153 to Arg205.

This sequence belongs to the RuvA family. In terms of assembly, homotetramer. Forms an RuvA(8)-RuvB(12)-Holliday junction (HJ) complex. HJ DNA is sandwiched between 2 RuvA tetramers; dsDNA enters through RuvA and exits via RuvB. An RuvB hexamer assembles on each DNA strand where it exits the tetramer. Each RuvB hexamer is contacted by two RuvA subunits (via domain III) on 2 adjacent RuvB subunits; this complex drives branch migration. In the full resolvosome a probable DNA-RuvA(4)-RuvB(12)-RuvC(2) complex forms which resolves the HJ.

It localises to the cytoplasm. Functionally, the RuvA-RuvB-RuvC complex processes Holliday junction (HJ) DNA during genetic recombination and DNA repair, while the RuvA-RuvB complex plays an important role in the rescue of blocked DNA replication forks via replication fork reversal (RFR). RuvA specifically binds to HJ cruciform DNA, conferring on it an open structure. The RuvB hexamer acts as an ATP-dependent pump, pulling dsDNA into and through the RuvAB complex. HJ branch migration allows RuvC to scan DNA until it finds its consensus sequence, where it cleaves and resolves the cruciform DNA. The protein is Holliday junction branch migration complex subunit RuvA of Brucella anthropi (strain ATCC 49188 / DSM 6882 / CCUG 24695 / JCM 21032 / LMG 3331 / NBRC 15819 / NCTC 12168 / Alc 37) (Ochrobactrum anthropi).